The chain runs to 132 residues: MAPSPRTGSRQDATALPSMSSTFWAFMILASLLIAYCSQLAAGTCEIVTLDRDSSQPRRTIARQTARCACRKGQIAGTTRARPACVDARIIKTKQWCDMLPCLEGEGCDLLINRSGWTCTQPGGRIKTTTVS.

A signal peptide spans 1-43 (MAPSPRTGSRQDATALPSMSSTFWAFMILASLLIAYCSQLAAG). Asn113 carries an N-linked (GlcNAc...) asparagine glycan.

It belongs to the TAFA family. As to expression, expressed in the subcutaneous and perirenal adipose tissue (at protein level). Highly expressed in adipose tissue with moderate expression in the brain and ovary. Isoform 2: Brain-specific.

The protein resides in the secreted. In terms of biological role, acts as a chemokine-like protein by regulating cell proliferation and migration through activation of G protein-coupled receptors (GPCRs), such as S1PR2 and FPR2. Stimulates chemotactic migration of macrophages mediated by the MAPK3/ERK1 and AKT1 pathway. Blocks TNFSF11/RANKL-induced osteoclast formation from macrophages by inhibiting up-regulation of osteoclast fusogenic and differentiation genes. Stimulation of macrophage migration and inhibition of osteoclast formation is mediated via GPCR FPR2. Acts as an adipokine by negatively regulating vascular smooth muscle cell (VSMC) proliferation and migration in response to platelet-derived growth factor stimulation via GPCR S1PR2 and G protein GNA12/GNA13-transmitted RHOA signaling. Inhibits injury-induced cell proliferation and neointima formation in the femoral arteries. The polypeptide is Chemokine-like protein TAFA-5 (Homo sapiens (Human)).